The sequence spans 290 residues: BEL1-like homeodomain protein 11 (290 aa).

The interval 20–36 (SRYAKAVQCLVEEVIDI) is SR/KY domain. Residues 81–152 (ENHEIHIKIT…SLEEAIISQL (72 aa)) form a BELL domain region. Positions 202–264 (AWKPIRGLPE…NARVRLWKPM (63 aa)) form a DNA-binding region, homeobox.

The protein belongs to the TALE/BELL homeobox family. In terms of assembly, may form heterodimeric complexes with TALE/KNOX proteins.

It localises to the nucleus. The chain is BEL1-like homeodomain protein 11 (BLH11) from Arabidopsis thaliana (Mouse-ear cress).